The sequence spans 172 residues: Myosin regulatory light chain RLC-A (172 aa).

Over residues 1–16 the composition is skewed to basic residues; sequence MSSKRAKTKTTKKRPQ. The tract at residues 1–20 is disordered; that stretch reads MSSKRAKTKTTKKRPQRATS. A Phosphothreonine; by MLCK modification is found at threonine 19. Serine 20 carries the post-translational modification Phosphoserine; by MLCK. EF-hand domains are found at residues 29 to 64, 98 to 133, and 134 to 169; these read SQIQ…MGKN, DPED…MGDR, and FTDE…GAKD. The Ca(2+) site is built by aspartate 42, asparagine 44, aspartate 46, and aspartate 53.

Myosin is a hexamer of 2 heavy chains and 4 light chains. In terms of processing, phosphorylation increases the actin-activated myosin ATPase activity and thereby regulates the contractile activity.

In terms of biological role, myosin regulatory subunit that plays an important role in regulation of both smooth muscle and nonmuscle cell contractile activity via its phosphorylation. Implicated in cytokinesis, receptor capping, and cell locomotion. The chain is Myosin regulatory light chain RLC-A (Rlc-a) from Rattus norvegicus (Rat).